The primary structure comprises 59 residues: Small integral membrane protein 30 (59 aa).

The signal sequence occupies residues 1 to 24; that stretch reads MTSVSTQLSLVLMSLLLVLPVVEA. Topologically, residues 25–29 are extracellular; the sequence is VEAGD. A helical membrane pass occupies residues 30–50; the sequence is AIALLLGVVLSITGICACLGV. Residues 51-59 lie on the Cytoplasmic side of the membrane; the sequence is YARKRNGQM.

As to quaternary structure, interacts (via transmembrane domain) with antiviral protein MAVS (via transmembrane domain); the interaction disrupts MAVS interaction with RIGI and inhibits MAVS aggregation, resulting in the repression of type I interferon signaling and innate immune responses.

Its subcellular location is the endoplasmic reticulum membrane. The protein localises to the mitochondrion membrane. Negatively regulates antiviral innate immune responses. Disrupts the interaction of antiviral protein MAVS with innate immune receptor RIGI and inhibits MAVS aggregation, resulting in the repression of type I interferon signaling and innate immune responses. This Homo sapiens (Human) protein is Small integral membrane protein 30.